Reading from the N-terminus, the 391-residue chain is Ferrochelatase (391 aa).

The Fe cation site is built by His196 and Glu281.

This sequence belongs to the ferrochelatase family.

The protein resides in the cytoplasm. It catalyses the reaction heme b + 2 H(+) = protoporphyrin IX + Fe(2+). It functions in the pathway porphyrin-containing compound metabolism; protoheme biosynthesis; protoheme from protoporphyrin-IX: step 1/1. Functionally, catalyzes the ferrous insertion into protoporphyrin IX. This Prochlorococcus marinus (strain MIT 9215) protein is Ferrochelatase.